The following is a 393-amino-acid chain: MNDVFLKALPVLQKLTTAGFEAYFVGGSVRDYLLNRTISDVDIATSAFPEEVKEIFQTSYDTGIAHGTVTVRENNEFYEVTTFRTEGTYEDFRRPSEVTFIRSLEEDLKRRDFTMNAIAMDEHFALHDPFSGQLAIQNKEIKAVGKASERFHEDALRMMRAVRFLSQLDFELDKETEKALESQIELLQHTSVERMTVEWIKMMKGKAAKRAIELLLKVKMETYLPGLKDEKPALSEFASWDWEKRTTEESIWLGLVVAVKPNNVNAFLKAWKLPNKTIQLVNKAYQDALKMKETWLTDELYHAGKAVFSLVNELNVIRGQENNQHKLSQAYEALPIHSKKDLAITGADLLKWSGESAGPWVKETLDKVECGVLSNEINNEKIQIKRWLGYHEE.

2 residues coordinate ATP: Gly-27 and Arg-30. CTP-binding residues include Gly-27 and Arg-30. Positions 40 and 42 each coordinate Mg(2+). Residues Arg-111, Asp-154, Arg-157, Arg-160, and Arg-163 each contribute to the ATP site. Residues Arg-111, Asp-154, Arg-157, Arg-160, and Arg-163 each coordinate CTP.

It belongs to the tRNA nucleotidyltransferase/poly(A) polymerase family. Bacterial CCA-adding enzyme type 3 subfamily. As to quaternary structure, homodimer. Mg(2+) is required as a cofactor.

The catalysed reaction is a tRNA precursor + 2 CTP + ATP = a tRNA with a 3' CCA end + 3 diphosphate. It carries out the reaction a tRNA with a 3' CCA end + 2 CTP + ATP = a tRNA with a 3' CCACCA end + 3 diphosphate. In terms of biological role, catalyzes the addition and repair of the essential 3'-terminal CCA sequence in tRNAs without using a nucleic acid template. Adds these three nucleotides in the order of C, C, and A to the tRNA nucleotide-73, using CTP and ATP as substrates and producing inorganic pyrophosphate. tRNA 3'-terminal CCA addition is required both for tRNA processing and repair. Also involved in tRNA surveillance by mediating tandem CCA addition to generate a CCACCA at the 3' terminus of unstable tRNAs. While stable tRNAs receive only 3'-terminal CCA, unstable tRNAs are marked with CCACCA and rapidly degraded. The polypeptide is CCA-adding enzyme (Listeria monocytogenes serotype 4a (strain HCC23)).